Here is a 506-residue protein sequence, read N- to C-terminus: Pyruvate kinase 2 (506 aa).

Phosphoserine is present on serine 24. Arginine 51 contributes to the substrate binding site. Residues asparagine 53, serine 55, aspartate 86, and threonine 87 each coordinate K(+). Position 53–56 (53–56 (NFSH)) interacts with ATP. Residues arginine 93 and lysine 179 each coordinate ATP. Glutamate 244 provides a ligand contact to Mg(2+). Residues glycine 267, aspartate 268, and threonine 300 each coordinate substrate. Aspartate 268 serves as a coordination point for Mg(2+).

The protein belongs to the pyruvate kinase family. As to quaternary structure, homotetramer. The cofactor is Mg(2+). Requires K(+) as cofactor.

It catalyses the reaction pyruvate + ATP = phosphoenolpyruvate + ADP + H(+). It functions in the pathway carbohydrate degradation; glycolysis; pyruvate from D-glyceraldehyde 3-phosphate: step 5/5. Its activity is regulated as follows. Not activated by fructose-1,6-bisphosphate. May be used by cells under conditions in which the level of glycolytic flux is very low. This Saccharomyces cerevisiae (strain ATCC 204508 / S288c) (Baker's yeast) protein is Pyruvate kinase 2 (PYK2).